Reading from the N-terminus, the 185-residue chain is Anaphase-promoting complex subunit 10 (185 aa).

The residue at position 2 (T2) is an N-acetylthreonine. One can recognise a DOC domain in the interval 2–185 (TTPNKTPPGA…IDFMMYRSIR (184 aa)). At K169 the chain carries N6-acetyllysine.

It belongs to the APC10 family. The mammalian APC/C is composed at least of 14 distinct subunits ANAPC1, ANAPC2, CDC27/APC3, ANAPC4, ANAPC5, CDC16/APC6, ANAPC7, CDC23/APC8, ANAPC10, ANAPC11, CDC26/APC12, ANAPC13, ANAPC15 and ANAPC16 that assemble into a complex of at least 19 chains with a combined molecular mass of around 1.2 MDa; APC/C interacts with FZR1 and FBXO5. The C-terminus of APC10 binds to CDC27/APC3. Interacts with PIWIL1; interaction only takes place when PIWIL1 binds piRNA. Interacts with FBXO43; the interaction is direct.

The protein operates within protein modification; protein ubiquitination. Functionally, component of the anaphase promoting complex/cyclosome (APC/C), a cell cycle-regulated E3 ubiquitin ligase that controls progression through mitosis and the G1 phase of the cell cycle. The APC/C complex acts by mediating ubiquitination and subsequent degradation of target proteins: it mainly mediates the formation of 'Lys-11'-linked polyubiquitin chains and, to a lower extent, the formation of 'Lys-48'- and 'Lys-63'-linked polyubiquitin chains. The APC/C complex catalyzes assembly of branched 'Lys-11'-/'Lys-48'-linked branched ubiquitin chains on target proteins. The protein is Anaphase-promoting complex subunit 10 (ANAPC10) of Bos taurus (Bovine).